The chain runs to 224 residues: uncharacterized protein (224 aa).

In terms of domain architecture, ABC transporter spans 2 to 221 (IEAKNVWKIY…KLRDGEIVEI (220 aa)). ATP is bound at residue 38-45 (GPSGCGKS).

Belongs to the ABC transporter superfamily.

This is an uncharacterized protein from Methanocaldococcus jannaschii (strain ATCC 43067 / DSM 2661 / JAL-1 / JCM 10045 / NBRC 100440) (Methanococcus jannaschii).